The chain runs to 141 residues: Large ribosomal subunit protein uL11 (141 aa).

This sequence belongs to the universal ribosomal protein uL11 family. As to quaternary structure, part of the ribosomal stalk of the 50S ribosomal subunit. Interacts with L10 and the large rRNA to form the base of the stalk. L10 forms an elongated spine to which L12 dimers bind in a sequential fashion forming a multimeric L10(L12)X complex. Post-translationally, one or more lysine residues are methylated.

Forms part of the ribosomal stalk which helps the ribosome interact with GTP-bound translation factors. The protein is Large ribosomal subunit protein uL11 of Roseiflexus sp. (strain RS-1).